Consider the following 306-residue polypeptide: Acetyl-coenzyme A carboxylase carboxyl transferase subunit beta (306 aa).

Positions 27-296 (LWHKCPSCEA…PRFVAPVIEP (270 aa)) constitute a CoA carboxyltransferase N-terminal domain. Positions 31, 34, 50, and 53 each coordinate Zn(2+). A C4-type zinc finger spans residues 31–53 (CPSCEAVLYRPELEKTLDVCPKC).

Belongs to the AccD/PCCB family. Acetyl-CoA carboxylase is a heterohexamer composed of biotin carboxyl carrier protein (AccB), biotin carboxylase (AccC) and two subunits each of ACCase subunit alpha (AccA) and ACCase subunit beta (AccD). The cofactor is Zn(2+).

The protein localises to the cytoplasm. The enzyme catalyses N(6)-carboxybiotinyl-L-lysyl-[protein] + acetyl-CoA = N(6)-biotinyl-L-lysyl-[protein] + malonyl-CoA. It functions in the pathway lipid metabolism; malonyl-CoA biosynthesis; malonyl-CoA from acetyl-CoA: step 1/1. Functionally, component of the acetyl coenzyme A carboxylase (ACC) complex. Biotin carboxylase (BC) catalyzes the carboxylation of biotin on its carrier protein (BCCP) and then the CO(2) group is transferred by the transcarboxylase to acetyl-CoA to form malonyl-CoA. This Pseudomonas syringae pv. syringae (strain B728a) protein is Acetyl-coenzyme A carboxylase carboxyl transferase subunit beta.